The chain runs to 383 residues: 1-deoxy-D-xylulose 5-phosphate reductoisomerase (383 aa).

NADPH-binding residues include Thr10, Gly11, Ser12, Ile13, Asn38, and Asn121. Lys122 lines the 1-deoxy-D-xylulose 5-phosphate pocket. Residue Glu123 participates in NADPH binding. Residue Asp147 coordinates Mn(2+). 1-deoxy-D-xylulose 5-phosphate is bound by residues Ser148, Glu149, Ser172, and His195. Glu149 is a Mn(2+) binding site. Residue Gly201 participates in NADPH binding. Positions 208, 213, 214, and 217 each coordinate 1-deoxy-D-xylulose 5-phosphate. Residue Glu217 coordinates Mn(2+).

It belongs to the DXR family. It depends on Mg(2+) as a cofactor. Requires Mn(2+) as cofactor.

The catalysed reaction is 2-C-methyl-D-erythritol 4-phosphate + NADP(+) = 1-deoxy-D-xylulose 5-phosphate + NADPH + H(+). The protein operates within isoprenoid biosynthesis; isopentenyl diphosphate biosynthesis via DXP pathway; isopentenyl diphosphate from 1-deoxy-D-xylulose 5-phosphate: step 1/6. In terms of biological role, catalyzes the NADPH-dependent rearrangement and reduction of 1-deoxy-D-xylulose-5-phosphate (DXP) to 2-C-methyl-D-erythritol 4-phosphate (MEP). This is 1-deoxy-D-xylulose 5-phosphate reductoisomerase from Ruthia magnifica subsp. Calyptogena magnifica.